A 465-amino-acid polypeptide reads, in one-letter code: MAPKKHSGFMMFVNEWRNHNAEGRRMTLAQAVSHCGTIWEKMTTQQRGPYNSGAKDADVADRGKRERLNCYGQGIAQVDLAHKEAAESLMHMKRTTERLVINAKKSYDLENAKFVFATFNYFTKALTTDVYVPAEFAACEYSLKEGVRSIYSTMIDPGQIIFGQGSDALHHSSTTHDLPLPPNALGEKNMAKLYRNIVCYLTKCQGADKPLIVFTPTENIAMVNSCFRYLECEDDSGDGGRKIQVFDIQYLLFILKKAVMDVAGLNDEKINKFVTDAFFKKDFFEFTSGIACQYHEDNDRTKYCTQSMVTRWAYTFSDFMCGDLAITVQPGKHIPAETKPNYRIICSDASSLAHESSFESFYSCPGSRVKKETQSEDFSLSSSQISVASRSYTPTDHTSFTTDLTKVCEFPSLGMRKSSKHTGPSVSTQRERNAGAWNLPAHSRSIQKYSDNDFSVTDSVRKLKN.

A DNA-binding region (HMG box) is located at residues 2–69 (APKKHSGFMM…ADRGKRERLN (68 aa)). The segment at 415–440 (MRKSSKHTGPSVSTQRERNAGAWNLP) is disordered.

The protein belongs to the maelstrom family.

It is found in the cytoplasm. The protein resides in the nucleus. Its function is as follows. Involved both in the piRNA and miRNA metabolic processes. As a component of the meiotic nuage, plays a central role during oogenesis by repressing transposable elements and preventing their mobilization, which is essential for the germline integrity. Repression of transposable elements is mediated via the piRNA metabolic process, which mediates the repression of transposable elements during meiosis by forming complexes composed of piRNAs and Piwi proteins and governs the repression of transposons. As a nuclear component, it is required for proper differentiation in the germline stem cell (GSC) lineage by repressing microRNA-7 (miR-7), thereby acting as an indirect regulator of bag-of-marbles (Bam). Acts by binding to the promoter of miR-7 gene and repressing its expression; miR-7 repression alleviates the Bam repression by miR-7, thereby allowing differentiation in the germline stem cell (GSC) lineage. The sequence is that of Protein maelstrom (mael) from Drosophila yakuba (Fruit fly).